A 142-amino-acid polypeptide reads, in one-letter code: Large ribosomal subunit protein uL11 (142 aa).

This sequence belongs to the universal ribosomal protein uL11 family. Part of the ribosomal stalk of the 50S ribosomal subunit. Interacts with L10 and the large rRNA to form the base of the stalk. L10 forms an elongated spine to which L12 dimers bind in a sequential fashion forming a multimeric L10(L12)X complex. In terms of processing, one or more lysine residues are methylated.

Functionally, forms part of the ribosomal stalk which helps the ribosome interact with GTP-bound translation factors. This chain is Large ribosomal subunit protein uL11, found in Rhodopseudomonas palustris (strain HaA2).